We begin with the raw amino-acid sequence, 189 residues long: Low affinity inorganic phosphate transporter 2 (189 aa).

Residues 1–55 lie on the Cytoplasmic side of the membrane; it reads TARYTALVAKDAKRAAADMGKVLHVEIDPEDAKVERMAKDESNQFGLFSWEFVRR. A helical membrane pass occupies residues 56–76; that stretch reads HGLHLFGTCSTWFLLDIAFYS. The Extracellular portion of the chain corresponds to 77–111; it reads QNLFQKDVFTAIGWIPPAKTMNAVQEVYKIARAQT. A helical membrane pass occupies residues 112–132; it reads LIALCSTVPGYWFTVAFIDII. The Cytoplasmic segment spans residues 133–134; it reads GR. Residues 135-155 traverse the membrane as a helical segment; that stretch reads FAIQLMGFFFMTVFMFAIAIP. The Extracellular portion of the chain corresponds to 156-165; it reads YHHWTLQENR. The chain crosses the membrane as a helical span at residues 166–186; the sequence is IGFVIMYSLTFFFANFGPNAT. Residues 187-189 are Cytoplasmic-facing; the sequence is TFV.

It belongs to the major facilitator superfamily. Phosphate:H(+) symporter (TC 2.A.1.9) family.

It localises to the cell membrane. The enzyme catalyses phosphate(in) + H(+)(in) = phosphate(out) + H(+)(out). In terms of biological role, low-affinity transporter for external inorganic phosphate (Pi). The polypeptide is Low affinity inorganic phosphate transporter 2 (Petunia hybrida (Petunia)).